Here is a 244-residue protein sequence, read N- to C-terminus: 2-C-methyl-D-erythritol 4-phosphate cytidylyltransferase (244 aa).

It belongs to the IspD/TarI cytidylyltransferase family. IspD subfamily.

The enzyme catalyses 2-C-methyl-D-erythritol 4-phosphate + CTP + H(+) = 4-CDP-2-C-methyl-D-erythritol + diphosphate. Its pathway is isoprenoid biosynthesis; isopentenyl diphosphate biosynthesis via DXP pathway; isopentenyl diphosphate from 1-deoxy-D-xylulose 5-phosphate: step 2/6. In terms of biological role, catalyzes the formation of 4-diphosphocytidyl-2-C-methyl-D-erythritol from CTP and 2-C-methyl-D-erythritol 4-phosphate (MEP). In Corynebacterium diphtheriae (strain ATCC 700971 / NCTC 13129 / Biotype gravis), this protein is 2-C-methyl-D-erythritol 4-phosphate cytidylyltransferase.